The sequence spans 397 residues: Growth-regulating factor 5 (397 aa).

A QLQ domain is found at 16–51; that stretch reads PFTPTQWEELEHQALIYKYMVSGVPVPPELIFSIRR. 2 consecutive short sequence motifs (bipartite nuclear localization signal) follow at residues 78-96 and 114-121; these read RKPDPEPGRCRRTDGKKWR and RGRNRARK. The WRC domain maps to 81–125; that stretch reads DPEPGRCRRTDGKKWRCSREAYPDSKYCEKHMHRGRNRARKSLDQ. Disordered regions lie at residues 108-172, 197-217, 288-320, and 340-397; these read CEKH…SMDA, LDYPYPSTSPKQQQQTLHHAS, PYHHCSTDHNKIDHHHTYSSSSSSQHLHHDHDH, and VLAN…DTGS. Residues 111-120 show a composition bias toward basic residues; sequence HMHRGRNRAR. Over residues 128 to 172 the composition is skewed to low complexity; the sequence is TTTTPLTSPSLSFTNNNNPSPTLSSSSSSNSSSTTYSASSSSMDA. Basic and acidic residues predominate over residues 288 to 298; it reads PYHHCSTDHNK.

The protein belongs to the GRF family. Interacts with GIF1. Strongly expressed in actively growing and developing tissues, such as roots, upper stems, and shoot tips containing the shoot apical meristem (SAM) and flower buds. Also expressed in mature flowers, but weakly expressed in mature stems and leaves.

It localises to the nucleus. Functionally, transcription activator that plays a role in the regulation of cell expansion in leaf and cotyledons tissues. Acts together with GIF1 for the development of appropriate leaf size and shape through the promotion and/or maintenance of cell proliferation activity in leaf primordia. This chain is Growth-regulating factor 5 (GRF5), found in Arabidopsis thaliana (Mouse-ear cress).